The following is a 335-amino-acid chain: Protein BRASSINAZOLE-RESISTANT 2 (335 aa).

The span at 1–19 (MTSDGATSTSAAAAAAAMA) shows a compositional bias: low complexity. Disordered stretches follow at residues 1 to 40 (MTSDGATSTSAAAAAAAMATRRKPSWRERENNRRRERRRR), 85 to 122 (TYRKGHKPLPGDMAGSSSRATPYSSHNQSPLSSTFDSP), and 164 to 190 (PPLRISNSAPVTPPVSSPTSRNPKPLP). Residues 22-103 (RKPSWREREN…PGDMAGSSSR (82 aa)) form a required for DNA-binding region. Polar residues predominate over residues 99 to 120 (GSSSRATPYSSHNQSPLSSTFD). Position 175 is a phosphothreonine (Thr175). Positions 231–251 (HAPATIPECDESDSSTVDSGH) are PEST-like.

This sequence belongs to the BZR/LAT61 family. In terms of assembly, interacts with ASK7/BIN2 through its C-terminal domain and with the bHLH transcription factors BIM1, BIM2 and BIM3 through its C- and N-terminal domains. Interacts (via N-terminus) with REF6 and ELF6. Interacts with MYB30. Interacts with IWS1. Interacts with ASHH2/SDG8. Binds to MYB56 when dephosphorylated in the nucleus of quiescent center (QC) cells. Binds to WRKY46, WRKY54 and WRKY70 to cooperatively regulate the expression of target genes. In terms of processing, phosphorylated by ASK7/BIN2. Phosphorylation increases protein degradation and/or interferes with the nuclear localization. Ubiquitously expressed in cotyledons, leaves, hypocotyls and roots.

It localises to the nucleus. It is found in the cytoplasm. Functionally, positive regulator of brassinosteroid (BR) signaling. Transcription factor that activates target gene expression by binding specifically to the DNA sequence 5'-CANNTG-3'(E box) through its N-terminal domain. Can bind individually to the promoter as a homodimer or synergistically as a heterodimer with BIM1, BIM2 or BIM3. The C-terminal domain is probably involved in transcriptional activation. Recruits the transcription elongation factor IWS1 to control BR-regulated gene expression. Forms a trimeric complex with IWS1 and ASHH2/SDG8 to regulate BR-regulated gene expression. Promotes quiescent center (QC) self-renewal by cell divisions in the primary root. Binds to the E-boxes of the BRAVO promoter to repress its expression. This chain is Protein BRASSINAZOLE-RESISTANT 2, found in Arabidopsis thaliana (Mouse-ear cress).